The chain runs to 212 residues: Uracil phosphoribosyltransferase (212 aa).

5-phospho-alpha-D-ribose 1-diphosphate contacts are provided by residues arginine 78, arginine 103, and 130–138 (DPMLATGGS). Residues isoleucine 193 and 198-200 (GDA) each bind uracil. Residue aspartate 199 coordinates 5-phospho-alpha-D-ribose 1-diphosphate.

It belongs to the UPRTase family. The cofactor is Mg(2+).

The enzyme catalyses UMP + diphosphate = 5-phospho-alpha-D-ribose 1-diphosphate + uracil. Its pathway is pyrimidine metabolism; UMP biosynthesis via salvage pathway; UMP from uracil: step 1/1. Allosterically activated by GTP. Functionally, catalyzes the conversion of uracil and 5-phospho-alpha-D-ribose 1-diphosphate (PRPP) to UMP and diphosphate. In Pseudomonas putida (strain ATCC 700007 / DSM 6899 / JCM 31910 / BCRC 17059 / LMG 24140 / F1), this protein is Uracil phosphoribosyltransferase.